Reading from the N-terminus, the 417-residue chain is D-inositol 3-phosphate glycosyltransferase (417 aa).

Residue His-10 coordinates 1D-myo-inositol 3-phosphate. UDP-N-acetyl-alpha-D-glucosamine contacts are provided by residues 16–17 and Gly-24; that span reads QP. 1D-myo-inositol 3-phosphate contacts are provided by residues 21–26, Lys-79, Tyr-112, Thr-136, and Arg-156; that span reads DAGGMN. UDP-N-acetyl-alpha-D-glucosamine-binding residues include Arg-230, Lys-235, and Gln-296. Residues Tyr-305, Arg-306, and Ala-308 each contribute to the Mg(2+) site. Residues Glu-318 and Glu-326 each coordinate UDP-N-acetyl-alpha-D-glucosamine. Thr-332 is a binding site for Mg(2+).

It belongs to the glycosyltransferase group 1 family. MshA subfamily. Homodimer.

It catalyses the reaction 1D-myo-inositol 3-phosphate + UDP-N-acetyl-alpha-D-glucosamine = 1D-myo-inositol 2-acetamido-2-deoxy-alpha-D-glucopyranoside 3-phosphate + UDP + H(+). In terms of biological role, catalyzes the transfer of a N-acetyl-glucosamine moiety to 1D-myo-inositol 3-phosphate to produce 1D-myo-inositol 2-acetamido-2-deoxy-glucopyranoside 3-phosphate in the mycothiol biosynthesis pathway. The chain is D-inositol 3-phosphate glycosyltransferase from Actinosynnema mirum (strain ATCC 29888 / DSM 43827 / JCM 3225 / NBRC 14064 / NCIMB 13271 / NRRL B-12336 / IMRU 3971 / 101).